Consider the following 400-residue polypeptide: DNA primase small subunit PriS (400 aa).

Catalysis depends on residues Asp98, Asp100, and Asp306.

This sequence belongs to the eukaryotic-type primase small subunit family. Heterodimer of a small subunit (PriS) and a large subunit (PriL). It depends on Mg(2+) as a cofactor. Mn(2+) serves as cofactor.

Its function is as follows. Catalytic subunit of DNA primase, an RNA polymerase that catalyzes the synthesis of short RNA molecules used as primers for DNA polymerase during DNA replication. The small subunit contains the primase catalytic core and has DNA synthesis activity on its own. Binding to the large subunit stabilizes and modulates the activity, increasing the rate of DNA synthesis while decreasing the length of the DNA fragments, and conferring RNA synthesis capability. The DNA polymerase activity may enable DNA primase to also catalyze primer extension after primer synthesis. May also play a role in DNA repair. This Methanocella arvoryzae (strain DSM 22066 / NBRC 105507 / MRE50) protein is DNA primase small subunit PriS.